Here is an 85-residue protein sequence, read N- to C-terminus: LYR motif-containing protein 5A (85 aa).

This sequence belongs to the complex I LYR family.

This chain is LYR motif-containing protein 5A (lyrm5a), found in Danio rerio (Zebrafish).